A 147-amino-acid chain; its full sequence is Transthyretin (147 aa).

The N-terminal stretch at 1 to 20 is a signal peptide; sequence MASHRLLLLCLAGLVFVSEA. Cys-30 carries the sulfocysteine modification. Lys-35 is an L-thyroxine binding site. The residue at position 62 (Glu-62) is a 4-carboxyglutamate; in a patient with Moyamoya disease. Residue Ser-72 is modified to Phosphoserine. Glu-74 contacts L-thyroxine. An N-linked (GlcNAc...) asparagine glycan is attached at Asn-118. Ser-137 provides a ligand contact to L-thyroxine.

This sequence belongs to the transthyretin family. In terms of assembly, homotetramer. Dimer of dimers. In the homotetramer, subunits assemble around a central channel that can accommodate two ligand molecules. Interacts with RBP4. Post-translationally, not glycosylated under normal conditions. Following unfolding, caused for example by variant AMYLD1 'Gly-38', the cryptic Asn-118 site is exposed and glycosylated by STT3B-containing OST complex, leading to its degradation by the ER-associated degradation (ERAD) pathway. In terms of processing, sulfonation of the reactive cysteine Cys-30 enhances the stability of the native conformation of TTR, avoiding misassembly of the protein leading to amyloid formation. As to expression, detected in serum and cerebrospinal fluid (at protein level). Highly expressed in choroid plexus epithelial cells. Detected in retina pigment epithelium and liver.

The protein localises to the secreted. It localises to the cytoplasm. Thyroid hormone-binding protein. Probably transports thyroxine from the bloodstream to the brain. This chain is Transthyretin (TTR), found in Homo sapiens (Human).